The primary structure comprises 418 residues: Serine--tRNA ligase (418 aa).

Position 226–228 (226–228) interacts with L-serine; sequence TSE. ATP-binding positions include 257–259 and Val-273; that span reads RRE. Glu-280 is an L-serine binding site. Position 344-347 (344-347) interacts with ATP; it reads ELTS. Residue Thr-379 coordinates L-serine.

It belongs to the class-II aminoacyl-tRNA synthetase family. Type-1 seryl-tRNA synthetase subfamily. As to quaternary structure, homodimer. The tRNA molecule binds across the dimer.

It localises to the cytoplasm. The catalysed reaction is tRNA(Ser) + L-serine + ATP = L-seryl-tRNA(Ser) + AMP + diphosphate + H(+). The enzyme catalyses tRNA(Sec) + L-serine + ATP = L-seryl-tRNA(Sec) + AMP + diphosphate + H(+). The protein operates within aminoacyl-tRNA biosynthesis; selenocysteinyl-tRNA(Sec) biosynthesis; L-seryl-tRNA(Sec) from L-serine and tRNA(Sec): step 1/1. Catalyzes the attachment of serine to tRNA(Ser). Is also able to aminoacylate tRNA(Sec) with serine, to form the misacylated tRNA L-seryl-tRNA(Sec), which will be further converted into selenocysteinyl-tRNA(Sec). The polypeptide is Serine--tRNA ligase (Mycobacteroides abscessus (strain ATCC 19977 / DSM 44196 / CCUG 20993 / CIP 104536 / JCM 13569 / NCTC 13031 / TMC 1543 / L948) (Mycobacterium abscessus)).